The following is a 237-amino-acid chain: 7-cyano-7-deazaguanine synthase (237 aa).

Residue 10-20 (FSGGQDSTTCL) participates in ATP binding. 4 residues coordinate Zn(2+): Cys-189, Cys-198, Cys-201, and Cys-204.

It belongs to the QueC family. The cofactor is Zn(2+).

It carries out the reaction 7-carboxy-7-deazaguanine + NH4(+) + ATP = 7-cyano-7-deazaguanine + ADP + phosphate + H2O + H(+). The protein operates within purine metabolism; 7-cyano-7-deazaguanine biosynthesis. In terms of biological role, catalyzes the ATP-dependent conversion of 7-carboxy-7-deazaguanine (CDG) to 7-cyano-7-deazaguanine (preQ(0)). This Aeromonas salmonicida (strain A449) protein is 7-cyano-7-deazaguanine synthase.